Here is a 432-residue protein sequence, read N- to C-terminus: 23S rRNA (uracil(1939)-C(5))-methyltransferase RlmD (432 aa).

The TRAM domain maps to 1–54 (MNPVVDILSLDHEGHGVARLDGKVTFVDGALAGERAEIAIFRKHAKYNSANAVA). Residues Cys67, Cys73, Cys76, and Cys155 each coordinate [4Fe-4S] cluster. S-adenosyl-L-methionine is bound by residues Gln264, Phe293, Asn298, Glu314, Asn341, and Asp362. Cys389 functions as the Nucleophile in the catalytic mechanism.

This sequence belongs to the class I-like SAM-binding methyltransferase superfamily. RNA M5U methyltransferase family. RlmD subfamily.

The catalysed reaction is uridine(1939) in 23S rRNA + S-adenosyl-L-methionine = 5-methyluridine(1939) in 23S rRNA + S-adenosyl-L-homocysteine + H(+). Catalyzes the formation of 5-methyl-uridine at position 1939 (m5U1939) in 23S rRNA. In Thiobacillus denitrificans (strain ATCC 25259 / T1), this protein is 23S rRNA (uracil(1939)-C(5))-methyltransferase RlmD.